The primary structure comprises 310 residues: HPr kinase/phosphorylase (310 aa).

Active-site residues include His138 and Lys159. 153 to 160 (GKSGVGKS) is a binding site for ATP. Residue Ser160 participates in Mg(2+) binding. The active-site Proton acceptor; for phosphorylation activity. Proton donor; for dephosphorylation activity is the Asp177. Residues 201 to 210 (LEIRGLGIIN) are important for the catalytic mechanism of both phosphorylation and dephosphorylation. Glu202 lines the Mg(2+) pocket. Arg243 is a catalytic residue. Positions 264–269 (PVRPGR) are important for the catalytic mechanism of dephosphorylation.

The protein belongs to the HPrK/P family. As to quaternary structure, homohexamer. Requires Mg(2+) as cofactor.

The catalysed reaction is [HPr protein]-L-serine + ATP = [HPr protein]-O-phospho-L-serine + ADP + H(+). It catalyses the reaction [HPr protein]-O-phospho-L-serine + phosphate + H(+) = [HPr protein]-L-serine + diphosphate. In terms of biological role, catalyzes the ATP- as well as the pyrophosphate-dependent phosphorylation of a specific serine residue in HPr, a phosphocarrier protein of the phosphoenolpyruvate-dependent sugar phosphotransferase system (PTS). HprK/P also catalyzes the pyrophosphate-producing, inorganic phosphate-dependent dephosphorylation (phosphorolysis) of seryl-phosphorylated HPr (P-Ser-HPr). The two antagonistic activities of HprK/P are regulated by several intracellular metabolites, which change their concentration in response to the absence or presence of rapidly metabolisable carbon sources (glucose, fructose, etc.) in the growth medium. Also phosphorylates/dephosphorylates the HPr-like catabolite repression protein crh on a specific serine residue. Therefore, by controlling the phosphorylation state of HPr and crh, HPrK/P is a sensor enzyme that plays a major role in the regulation of carbon metabolism and sugar transport: it mediates carbon catabolite repression (CCR), and regulates PTS-catalyzed carbohydrate uptake and inducer exclusion. This chain is HPr kinase/phosphorylase, found in Bacillus pumilus (strain SAFR-032).